A 117-amino-acid polypeptide reads, in one-letter code: Large ribosomal subunit protein bL19 (117 aa).

It belongs to the bacterial ribosomal protein bL19 family.

Functionally, this protein is located at the 30S-50S ribosomal subunit interface and may play a role in the structure and function of the aminoacyl-tRNA binding site. This chain is Large ribosomal subunit protein bL19, found in Exiguobacterium sp. (strain ATCC BAA-1283 / AT1b).